The primary structure comprises 326 residues: UDP-N-acetylglucosamine transporter (326 aa).

8 consecutive transmembrane segments (helical) span residues 4-24 (NLKY…VLTM), 38-58 (LSST…IFLV), 136-156 (LGMY…FVQW), 174-194 (FVGL…GVYF), 212-232 (LGFF…GELV), 243-263 (QLTW…AAVI), 269-289 (ILKG…SYFW), and 293-313 (FVPT…TFLY).

It belongs to the nucleotide-sugar transporter family. SLC35A subfamily. In terms of assembly, interacts with SLC35A2; the interaction is reduced in the presence of SLC35A4. Found in a complex with SLC35A2 and SLC35A4. Interacts with MGAT4B. In terms of processing, O-Glcnacylation regulates the stability of SLC35A3 and the specific complex formation with MGAT4B.

It localises to the golgi apparatus membrane. The enzyme catalyses UMP(out) + UDP-N-acetyl-alpha-D-glucosamine(in) = UMP(in) + UDP-N-acetyl-alpha-D-glucosamine(out). Functionally, transports diphosphate-N-acetylglucosamine (UDP-GlcNAc) from the cytosol into the lumen of the Golgi apparatus, functioning as an antiporter that exchanges UDP-N-acetyl-alpha-D-glucosamine for UMP. May supply UDP-GlcNAc as substrate for Golgi-resident glycosyltransferases that generate highly branched, multiantennary complex N-glycans and keratan sulfate. However, the exact role of SLC35A3 still needs to be elucidated, it could be a member of a catalytically more efficient multiprotein complex rather than function independently as a single transporter. In Rattus norvegicus (Rat), this protein is UDP-N-acetylglucosamine transporter (Slc35a3).